We begin with the raw amino-acid sequence, 58 residues long: Keratin-associated protein 21-3 (58 aa).

In terms of assembly, interacts with hair keratins.

Its function is as follows. In the hair cortex, hair keratin intermediate filaments are embedded in an interfilamentous matrix, consisting of hair keratin-associated proteins (KRTAP), which are essential for the formation of a rigid and resistant hair shaft through their extensive disulfide bond cross-linking with abundant cysteine residues of hair keratins. The matrix proteins include the high-sulfur and high-glycine-tyrosine keratins. The protein is Keratin-associated protein 21-3 (KRTAP21-3) of Homo sapiens (Human).